We begin with the raw amino-acid sequence, 317 residues long: UDP-3-O-acylglucosamine N-acyltransferase (317 aa).

The active-site Proton acceptor is His229.

This sequence belongs to the transferase hexapeptide repeat family. LpxD subfamily. In terms of assembly, homotrimer.

The enzyme catalyses a UDP-3-O-[(3R)-3-hydroxyacyl]-alpha-D-glucosamine + a (3R)-hydroxyacyl-[ACP] = a UDP-2-N,3-O-bis[(3R)-3-hydroxyacyl]-alpha-D-glucosamine + holo-[ACP] + H(+). It functions in the pathway bacterial outer membrane biogenesis; LPS lipid A biosynthesis. Functionally, catalyzes the N-acylation of UDP-3-O-acylglucosamine using 3-hydroxyacyl-ACP as the acyl donor. Is involved in the biosynthesis of lipid A, a phosphorylated glycolipid that anchors the lipopolysaccharide to the outer membrane of the cell. This Campylobacter concisus (strain 13826) protein is UDP-3-O-acylglucosamine N-acyltransferase.